A 323-amino-acid polypeptide reads, in one-letter code: MVTILDRTSSDEKRIRHPEKAHRPDTEVMRKPEWIRVKAPTSKGYHETRELVRSHKLVTVCEEAGCPNIGECWEKKHATFMIMGEICTRACAFCNVATGKPNALDMDEPENVAKAVKQMGLSHVVITSVDRDDLADGGAEHFEKVIWAIRAASPTTTIEILTPDFLKKPGALERVVAAKPDVFNHNMETVPGNYLTVRPGARYFHSVRLLQRVKELDPTMFTKSGIMVGLGEERNEVLQLMDDLRSADVDFLTIGQYLQPTRKHHKVEAFVTPEEFKSYETVAYAKGFLMVSSSPLTRSSHHAGDDFERLRAAREKKLLAAAE.

The segment at 1-27 is disordered; the sequence is MVTILDRTSSDEKRIRHPEKAHRPDTE. Cys61, Cys66, Cys72, Cys87, Cys91, Cys94, and Ser300 together coordinate [4Fe-4S] cluster. In terms of domain architecture, Radical SAM core spans 73 to 289; that stretch reads WEKKHATFMI…ETVAYAKGFL (217 aa).

The protein belongs to the radical SAM superfamily. Lipoyl synthase family. The cofactor is [4Fe-4S] cluster.

It is found in the cytoplasm. It catalyses the reaction [[Fe-S] cluster scaffold protein carrying a second [4Fe-4S](2+) cluster] + N(6)-octanoyl-L-lysyl-[protein] + 2 oxidized [2Fe-2S]-[ferredoxin] + 2 S-adenosyl-L-methionine + 4 H(+) = [[Fe-S] cluster scaffold protein] + N(6)-[(R)-dihydrolipoyl]-L-lysyl-[protein] + 4 Fe(3+) + 2 hydrogen sulfide + 2 5'-deoxyadenosine + 2 L-methionine + 2 reduced [2Fe-2S]-[ferredoxin]. Its pathway is protein modification; protein lipoylation via endogenous pathway; protein N(6)-(lipoyl)lysine from octanoyl-[acyl-carrier-protein]: step 2/2. In terms of biological role, catalyzes the radical-mediated insertion of two sulfur atoms into the C-6 and C-8 positions of the octanoyl moiety bound to the lipoyl domains of lipoate-dependent enzymes, thereby converting the octanoylated domains into lipoylated derivatives. The protein is Lipoyl synthase of Agrobacterium fabrum (strain C58 / ATCC 33970) (Agrobacterium tumefaciens (strain C58)).